A 117-amino-acid polypeptide reads, in one-letter code: Ig heavy chain V region MOPC 104E (117 aa).

One can recognise an Ig-like domain in the interval 1–116 (EVQLQQSGPE…WGAGTTVTVS (116 aa)). A disulfide bond links Cys-22 and Cys-96. Asn-55 carries an N-linked (GlcNAc...) (high mannose) asparagine; atypical glycan.

The polypeptide is Ig heavy chain V region MOPC 104E (Mus musculus (Mouse)).